Reading from the N-terminus, the 58-residue chain is Large ribosomal subunit protein bL32 (58 aa).

Basic residues predominate over residues 1–19 (MAVPKRKTSKSNTKMRRAA). A disordered region spans residues 1-22 (MAVPKRKTSKSNTKMRRAANSK).

The protein belongs to the bacterial ribosomal protein bL32 family.

The sequence is that of Large ribosomal subunit protein bL32 from Clostridioides difficile (strain 630) (Peptoclostridium difficile).